Reading from the N-terminus, the 1053-residue chain is Zinc finger and BTB domain-containing protein 11 (1053 aa).

Over residues 141–156 (LDLESGEESNESEDDL) the composition is skewed to acidic residues. The interval 141 to 173 (LDLESGEESNESEDDLSNFTSSPTTASKPAKKK) is disordered. The span at 157-168 (SNFTSSPTTASK) shows a compositional bias: low complexity. The region spanning 214–282 (CDVTLLIEGE…AYTSVLSFDF (69 aa)) is the BTB domain. Positions 546 to 566 (LVQRGKKMKQPKRDAKENTEE) are disordered. Residues 556-566 (PKRDAKENTEE) are compositionally biased toward basic and acidic residues. 2 consecutive C2H2-type zinc fingers follow at residues 569 to 591 (HKCG…KLKH) and 597 to 619 (YKCP…LIRH). The tract at residues 619-643 (HTRKDAPSSSSSNSTSNEASGTSSE) is disordered. Positions 626–642 (SSSSSNSTSNEASGTSS) are enriched in low complexity. C2H2-type zinc fingers lie at residues 651–673 (FICS…MLKH), 679–701 (HACQ…QSLH), 707–729 (FQCE…MSIH), 735–757 (YLCS…FKKH), 766–788 (YHCT…MNKH), 794–816 (FQCQ…VKSH), 822–846 (YRCN…KATH), 858–880 (RVCE…MNNH), 886–908 (FECL…VRTH), and 914–937 (YVCP…TKFH). Residue lysine 1043 forms a Glycyl lysine isopeptide (Lys-Gly) (interchain with G-Cter in SUMO2) linkage. Serine 1050 carries the post-translational modification Phosphoserine.

The protein localises to the nucleus. It is found in the nucleolus. In terms of biological role, may be involved in transcriptional regulation. This is Zinc finger and BTB domain-containing protein 11 from Homo sapiens (Human).